A 298-amino-acid chain; its full sequence is Syntaxin-4 (298 aa).

At 1–274 (MRDRTHELRQ…NQKKARKKKV (274 aa)) the chain is on the cytoplasmic side. Phosphoserine is present on residues serine 15, serine 29, serine 36, serine 117, serine 208, and serine 248. Positions 38–163 (DDEFFQKVQT…ERIRRQLKIT (126 aa)) form a coiled coil. Residues 154–298 (ERIRRQLKIT…VIIGITITVG (145 aa)) form an interaction with CENPF region. Residues 200–262 (LNEISARHSE…ERGQEHVKIA (63 aa)) form the t-SNARE coiled-coil homology domain. A helical; Anchor for type IV membrane protein transmembrane segment spans residues 275-295 (MIAICVSVTVLILAVIIGITI). Residues 296–298 (TVG) are Extracellular-facing.

Belongs to the syntaxin family. Interacts with STXBP6. Component of the SNARE complex composed of STX4, SNAP23 and VAMP7 that interacts with SYT7 during lysosomal exocytosis. Found in a complex with VAMP8 and SNAP23. Detected in a complex with SNAP23 and STXBP4. Interacts with VAMP2. Interacts with SNAP23 and SNAPIN. Interacts with LLGL1. Interacts (via C-terminus) with CENPF. Interacts with DOC2B. Interacts with STXBP3; excludes interaction with DOC2B and SNAP25. Interacts with STXBP4; excludes interaction with VAMP2. Interacts with STXBP5L. As to expression, expressed in the outer and inner hair cells of the cochlea.

It localises to the cell membrane. It is found in the cell projection. The protein resides in the neuron projection. Its subcellular location is the stereocilium. In terms of biological role, plasma membrane t-SNARE that mediates docking of transport vesicles. Necessary for the translocation of SLC2A4 from intracellular vesicles to the plasma membrane. In neurons, recruited at neurite tips to membrane domains rich in the phospholipid 1-oleoyl-2-palmitoyl-PC (OPPC) which promotes neurite tip surface expression of the dopamine transporter SLC6A3/DAT by facilitating fusion of SLC6A3-containing transport vesicles with the plasma membrane. Together with STXB3 and VAMP2, may also play a role in docking/fusion of intracellular GLUT4-containing vesicles with the cell surface in adipocytes and in docking of synaptic vesicles at presynaptic active zones. Required for normal hearing. This is Syntaxin-4 (Stx4) from Mus musculus (Mouse).